A 504-amino-acid polypeptide reads, in one-letter code: Probable cytochrome P450 513E1 (504 aa).

The chain crosses the membrane as a helical span at residues 1-21 (MNLYISILILIISLIIFFKNN). Residue C450 coordinates heme.

The protein belongs to the cytochrome P450 family. It depends on heme as a cofactor.

It localises to the membrane. The chain is Probable cytochrome P450 513E1 (cyp513E1) from Dictyostelium discoideum (Social amoeba).